An 805-amino-acid polypeptide reads, in one-letter code: Leucine--tRNA ligase (805 aa).

The 'HIGH' region motif lies at 40-51 (PYPSGQGLHVGH). The short motif at 577–581 (KMSKS) is the 'KMSKS' region element. Lysine 580 serves as a coordination point for ATP.

The protein belongs to the class-I aminoacyl-tRNA synthetase family.

The protein resides in the cytoplasm. It carries out the reaction tRNA(Leu) + L-leucine + ATP = L-leucyl-tRNA(Leu) + AMP + diphosphate. The sequence is that of Leucine--tRNA ligase from Limosilactobacillus fermentum (strain NBRC 3956 / LMG 18251) (Lactobacillus fermentum).